The chain runs to 172 residues: T-cell receptor gamma chain C region C7.5 (172 aa).

Positions 1 to 140 (DKKLDADISP…QFTITSAYYT (140 aa)) are c region. Residues 141–160 (YLLLLLKSVIYLAIISFSLL) form a helical membrane-spanning segment. At 161-172 (RRTSVCCNEKKS) the chain is on the cytoplasmic side.

Its subcellular location is the membrane. This chain is T-cell receptor gamma chain C region C7.5, found in Mus musculus (Mouse).